The sequence spans 258 residues: UPF0246 protein Bpro_3713 (258 aa).

Belongs to the UPF0246 family.

The protein is UPF0246 protein Bpro_3713 of Polaromonas sp. (strain JS666 / ATCC BAA-500).